Reading from the N-terminus, the 673-residue chain is UvrABC system protein B (673 aa).

One can recognise a Helicase ATP-binding domain in the interval 26–183 (ANFEAGLAKQ…RHLTDLQYTR (158 aa)). Residue 39–46 (GVTGSGKT) participates in ATP binding. The Beta-hairpin motif lies at 92–115 (YYDYYQPEAYVPSSDTFIEKDSSI). The Helicase C-terminal domain occupies 431-597 (QVDDLMSEIH…SVERPISDIM (167 aa)). Residues 601 to 631 (REDAAEKKSGKGRSKSRQVAEETPDYRAMKP) form a disordered region. Over residues 618-630 (QVAEETPDYRAMK) the composition is skewed to basic and acidic residues. The 36-residue stretch at 635-670 (AGKLKSLEQKMYQHAKDLEFEAAAQIRDQIQKLKTA) folds into the UVR domain.

It belongs to the UvrB family. Forms a heterotetramer with UvrA during the search for lesions. Interacts with UvrC in an incision complex.

The protein localises to the cytoplasm. The UvrABC repair system catalyzes the recognition and processing of DNA lesions. A damage recognition complex composed of 2 UvrA and 2 UvrB subunits scans DNA for abnormalities. Upon binding of the UvrA(2)B(2) complex to a putative damaged site, the DNA wraps around one UvrB monomer. DNA wrap is dependent on ATP binding by UvrB and probably causes local melting of the DNA helix, facilitating insertion of UvrB beta-hairpin between the DNA strands. Then UvrB probes one DNA strand for the presence of a lesion. If a lesion is found the UvrA subunits dissociate and the UvrB-DNA preincision complex is formed. This complex is subsequently bound by UvrC and the second UvrB is released. If no lesion is found, the DNA wraps around the other UvrB subunit that will check the other stand for damage. This is UvrABC system protein B from Xanthomonas oryzae pv. oryzae (strain MAFF 311018).